The chain runs to 296 residues: Cyclin-dependent kinase 1 (296 aa).

In terms of domain architecture, Protein kinase spans 10-288 (YQKLEKLGEG…AKEALLHPYF (279 aa)). Residues 16–24 (LGEGTYGKV) and Lys39 contribute to the ATP site. Thr20 is subject to Phosphothreonine. Position 21 is a phosphotyrosine (Tyr21). The Proton acceptor role is filled by Asp129. Thr162 carries the post-translational modification Phosphothreonine; by CAK.

Belongs to the protein kinase superfamily. CMGC Ser/Thr protein kinase family. CDC2/CDKX subfamily. Forms a stable but non-covalent complex with a regulatory subunit and with a cyclin.

The catalysed reaction is L-seryl-[protein] + ATP = O-phospho-L-seryl-[protein] + ADP + H(+). It catalyses the reaction L-threonyl-[protein] + ATP = O-phospho-L-threonyl-[protein] + ADP + H(+). It carries out the reaction [DNA-directed RNA polymerase] + ATP = phospho-[DNA-directed RNA polymerase] + ADP + H(+). Phosphorylation at Thr-20 or Tyr-21 inactivates the enzyme, while phosphorylation at Thr-162 activates it. Functionally, plays a key role in the control of the eukaryotic cell cycle. Required for entry into S-phase and mitosis. p34 is a component of the kinase complex that phosphorylates the repetitive C-terminus of RNA polymerase II. This chain is Cyclin-dependent kinase 1 (cdk1), found in Dictyostelium discoideum (Social amoeba).